A 627-amino-acid chain; its full sequence is WPP domain-interacting tail-anchored protein 2 (627 aa).

Coiled coils occupy residues 81 to 152 (CGIL…RRTL), 188 to 218 (LEKSLSRELELEKKLMEFQQNEEQLKLKLHY), and 312 to 542 (TLRE…KILR). The disordered stretch occupies residues 577–597 (SLQEDERTREEPEKQSVSEKS). A compositionally biased stretch (basic and acidic residues) spans 580 to 597 (EDERTREEPEKQSVSEKS). Residues 606-626 (LKHILVVALVFVLFCSFFGVT) traverse the membrane as a helical segment.

In terms of assembly, component of Ran complexes at least composed of WIT1 or WIT2, RANGAP1 or RANGAP2, and WIP1 or WIP2 or WIP3. Interacts with KAKU1. Core component of the LINC complex which is composed of inner nuclear membrane SUN domain-containing proteins coupled to outer nuclear membrane WIP and WIT proteins. The LINC complex also involves nucleoskeletal proteins CRWN/LINC and possibly KAKU4 and the cytoskeletal myosin KAKU1. Interacts with WIP1, WIP2 and WIP3. Ubiquitous.

It is found in the membrane. In terms of biological role, together with WIT1, required for the nuclear envelope docking of RANGAP proteins in root tips. Plays a role in nuclear shape determination. As component of the SUN-WIP-WIT2-KAKU1 complex, mediates the transfer of cytoplasmic forces to the nuclear envelope (NE), leading to nuclear shape changes. The sequence is that of WPP domain-interacting tail-anchored protein 2 (WIT2) from Arabidopsis thaliana (Mouse-ear cress).